Consider the following 896-residue polypeptide: Translation initiation factor IF-2 (896 aa).

The disordered stretch occupies residues 46–315 (LAHLNRQHGG…FNKPAQPVER (270 aa)). The segment covering 99-247 (SASEEQEREE…RKQQEKEDVH (149 aa)) has biased composition (basic and acidic residues). Residues 269–278 (SRKRGKKRRR) are compositionally biased toward basic residues. A compositionally biased stretch (basic and acidic residues) spans 279–288 (KDEESDDTPR). Positions 396 to 565 (PRAPVVTVMG…LLQSEVLDLR (170 aa)) constitute a tr-type G domain. Residues 405-412 (GHVDHGKT) form a G1 region. 405–412 (GHVDHGKT) is a GTP binding site. Residues 430–434 (GITQH) are G2. Residues 451-454 (DTPG) form a G3 region. GTP is bound by residues 451 to 455 (DTPGH) and 505 to 508 (NKMD). The segment at 505-508 (NKMD) is G4. The tract at residues 541–543 (SAH) is G5.

Belongs to the TRAFAC class translation factor GTPase superfamily. Classic translation factor GTPase family. IF-2 subfamily.

It localises to the cytoplasm. Its function is as follows. One of the essential components for the initiation of protein synthesis. Protects formylmethionyl-tRNA from spontaneous hydrolysis and promotes its binding to the 30S ribosomal subunits. Also involved in the hydrolysis of GTP during the formation of the 70S ribosomal complex. This chain is Translation initiation factor IF-2, found in Idiomarina loihiensis (strain ATCC BAA-735 / DSM 15497 / L2-TR).